A 538-amino-acid chain; its full sequence is Natural resistance-associated macrophage protein 1 (538 aa).

The segment at 1–36 (MTGDTDPPKQSRTQYGSISSSPSPGPPQVPPGGTYL) is disordered. The Cytoplasmic segment spans residues 1-54 (MTGDTDPPKQSRTQYGSISSSPSPGPPQVPPGGTYLSEKIPIPNAEPGTFSLRK). The chain crosses the membrane as a helical span at residues 55-75 (LWAFTGPGFLMSIAYLDPGNI). At 76-81 (QSDLQA) the chain is on the extracellular side. The helical transmembrane segment at 82–102 (GAVAGFKLLWVLLWATVLGLL) threads the bilayer. Residues 103-139 (CQRLAARLGVVTGKDLGEICHLYYPKVPRTLLWLNME) are Cytoplasmic-facing. Residues 140–160 (LAIVGSDMQEVIGTAIAFNLL) traverse the membrane as a helical segment. Residues 161–164 (SAGR) are Extracellular-facing. Residues 165–185 (IPLWGGVLITVVDTFFFLYLN) traverse the membrane as a helical segment. The Cytoplasmic portion of the chain corresponds to 186-193 (NYGLRKLE). A helical transmembrane segment spans residues 194–214 (AFFAFLIAIMAFTFGYEYVVA). Topologically, residues 215-240 (RPAQGALLRGLFLPSCSGCGQPELLQ) are extracellular. The helical transmembrane segment at 241 to 261 (AVGIVGAIIMPHNIYLHSALV) threads the bilayer. Over 262-286 (KSREVDRTRREDIREANMYFLIEST) the chain is Cytoplasmic. Residues 287 to 307 (IALFVSFFINLFVMAVFGQAF) traverse the membrane as a helical segment. Residues 308–346 (YQQTNQAAFNICANSSLHDYAKIFPRNNLTVAVDFYQGG) lie on the Extracellular side of the membrane. N-linked (GlcNAc...) asparagine glycosylation is found at N321 and N335. A helical transmembrane segment spans residues 347-367 (VILGCLFGPAALYIWAVGLLA). Topologically, residues 368 to 394 (AGQSSTMTGTYAGQFVMEGFLKLRWSR) are cytoplasmic. The helical transmembrane segment at 395-415 (FARLLLTRSCAILPALLVAVF) threads the bilayer. The Extracellular segment spans residues 416 to 432 (KELQDLSSLNDLLNVLQ). Residues 433-453 (SLLLPFAVLPILTFTSMPALM) traverse the membrane as a helical segment. Residues 454–468 (QEFASGRVNKVITSS) are Cytoplasmic-facing. The chain crosses the membrane as a helical span at residues 469–489 (IMLLVCAINFYFLVSYLPSLP). Over 490 to 492 (HPA) the chain is Extracellular. A helical membrane pass occupies residues 493–513 (YFGLVALLAVIYLGLTTYLVW). The Cytoplasmic portion of the chain corresponds to 514 to 538 (TCLIAHGATLLVHSSHQHFLYGLLE).

It belongs to the NRAMP family.

The protein resides in the late endosome membrane. Its subcellular location is the lysosome membrane. It carries out the reaction Zn(2+)(in) + H(+)(out) = Zn(2+)(out) + H(+)(in). The enzyme catalyses Fe(2+)(in) + H(+)(out) = Fe(2+)(out) + H(+)(in). It catalyses the reaction Mn(2+)(in) + H(+)(out) = Mn(2+)(out) + H(+)(in). Macrophage-specific antiporter that fluxes metal ions in either direction against a proton gradient. Localized to late endosomal lysosomal membranes, delivers bivalent cations from the cytosol into these acidic compartments where they may directly affect antimicrobial activity. Involved in iron metabolism and host natural resistance to infection with intracellular parasites. Pathogen resistance involves sequestration of Fe(2+) and Mn(2+), cofactors of both prokaryotic and eukaryotic catalases and superoxide dismutases, not only to protect the macrophage against its own generation of reactive oxygen species, but to deny the cations to the pathogen for synthesis of its protective enzymes. This Sus scrofa (Pig) protein is Natural resistance-associated macrophage protein 1 (SLC11A1).